Here is a 500-residue protein sequence, read N- to C-terminus: 4-aminobutyrate aminotransferase, mitochondrial (500 aa).

The N-terminal 28 residues, 1 to 28, are a transit peptide targeting the mitochondrion; it reads MASVLLTRRLACSFRHNHRLLVPGWRHI. C163 provides a ligand contact to [2Fe-2S] cluster. 164 to 165 contributes to the pyridoxal 5'-phosphate binding site; it reads GS. C166 is a binding site for [2Fe-2S] cluster. A substrate-binding site is contributed by R220. An N6-succinyllysine modification is found at K231. K252 bears the N6-acetyllysine; alternate mark. K252 bears the N6-succinyllysine; alternate mark. N6-acetyllysine is present on residues K279 and K318. Position 357 is an N6-(pyridoxal phosphate)lysine (K357). Position 381 (T381) interacts with pyridoxal 5'-phosphate. K413 is modified (N6-acetyllysine; alternate). N6-succinyllysine; alternate is present on K413. An N6-acetyllysine mark is found at K452 and K470.

Belongs to the class-III pyridoxal-phosphate-dependent aminotransferase family. As to quaternary structure, homodimer; disulfide-linked. Requires pyridoxal 5'-phosphate as cofactor. The cofactor is [2Fe-2S] cluster.

Its subcellular location is the mitochondrion matrix. It catalyses the reaction 4-aminobutanoate + 2-oxoglutarate = succinate semialdehyde + L-glutamate. It carries out the reaction (S)-3-amino-2-methylpropanoate + 2-oxoglutarate = 2-methyl-3-oxopropanoate + L-glutamate. Catalyzes the conversion of gamma-aminobutyrate and L-beta-aminoisobutyrate to succinate semialdehyde and methylmalonate semialdehyde, respectively. Can also convert delta-aminovalerate and beta-alanine. The polypeptide is 4-aminobutyrate aminotransferase, mitochondrial (ABAT) (Sus scrofa (Pig)).